The chain runs to 315 residues: Methionyl-tRNA formyltransferase (315 aa).

Position 113–116 (113–116 (SILP)) interacts with (6S)-5,6,7,8-tetrahydrofolate.

It belongs to the Fmt family.

It catalyses the reaction L-methionyl-tRNA(fMet) + (6R)-10-formyltetrahydrofolate = N-formyl-L-methionyl-tRNA(fMet) + (6S)-5,6,7,8-tetrahydrofolate + H(+). Attaches a formyl group to the free amino group of methionyl-tRNA(fMet). The formyl group appears to play a dual role in the initiator identity of N-formylmethionyl-tRNA by promoting its recognition by IF2 and preventing the misappropriation of this tRNA by the elongation apparatus. The sequence is that of Methionyl-tRNA formyltransferase from Aliivibrio fischeri (strain ATCC 700601 / ES114) (Vibrio fischeri).